We begin with the raw amino-acid sequence, 683 residues long: DNA ligase (683 aa).

NAD(+) contacts are provided by residues 29–33, 79–80, and glutamate 109; these read DAEFD and SL. Lysine 111 (N6-AMP-lysine intermediate) is an active-site residue. 4 residues coordinate NAD(+): arginine 132, glutamate 172, lysine 288, and lysine 312. Residues cysteine 406, cysteine 409, cysteine 425, and cysteine 431 each contribute to the Zn(2+) site. Residues 595–683 enclose the BRCT domain; sequence SVPRTLAGVT…GPPAEAGEPT (89 aa).

It belongs to the NAD-dependent DNA ligase family. LigA subfamily. Mg(2+) serves as cofactor. It depends on Mn(2+) as a cofactor.

The catalysed reaction is NAD(+) + (deoxyribonucleotide)n-3'-hydroxyl + 5'-phospho-(deoxyribonucleotide)m = (deoxyribonucleotide)n+m + AMP + beta-nicotinamide D-nucleotide.. DNA ligase that catalyzes the formation of phosphodiester linkages between 5'-phosphoryl and 3'-hydroxyl groups in double-stranded DNA using NAD as a coenzyme and as the energy source for the reaction. It is essential for DNA replication and repair of damaged DNA. The sequence is that of DNA ligase from Mycobacterium ulcerans (strain Agy99).